The chain runs to 479 residues: Aspartyl/glutamyl-tRNA(Asn/Gln) amidotransferase subunit B (479 aa).

Belongs to the GatB/GatE family. GatB subfamily. Heterotrimer of A, B and C subunits.

The catalysed reaction is L-glutamyl-tRNA(Gln) + L-glutamine + ATP + H2O = L-glutaminyl-tRNA(Gln) + L-glutamate + ADP + phosphate + H(+). It carries out the reaction L-aspartyl-tRNA(Asn) + L-glutamine + ATP + H2O = L-asparaginyl-tRNA(Asn) + L-glutamate + ADP + phosphate + 2 H(+). Functionally, allows the formation of correctly charged Asn-tRNA(Asn) or Gln-tRNA(Gln) through the transamidation of misacylated Asp-tRNA(Asn) or Glu-tRNA(Gln) in organisms which lack either or both of asparaginyl-tRNA or glutaminyl-tRNA synthetases. The reaction takes place in the presence of glutamine and ATP through an activated phospho-Asp-tRNA(Asn) or phospho-Glu-tRNA(Gln). The protein is Aspartyl/glutamyl-tRNA(Asn/Gln) amidotransferase subunit B of Streptococcus pyogenes serotype M5 (strain Manfredo).